The chain runs to 62 residues: Insect toxin BsIT4 (62 aa).

An LCN-type CS-alpha/beta domain is found at 1–62 (DGYIKGNKGC…WLYAATNTCG (62 aa)). Cystine bridges form between Cys-10/Cys-61, Cys-14/Cys-35, Cys-21/Cys-42, and Cys-25/Cys-44.

Belongs to the long (4 C-C) scorpion toxin superfamily. Sodium channel inhibitor family. Beta subfamily. As to expression, expressed by the venom gland.

Its subcellular location is the secreted. Functionally, depressant insect beta-toxins cause a transient contraction paralysis followed by a slow flaccid paralysis. They bind voltage-independently at site-4 of sodium channels (Nav) and shift the voltage of activation toward more negative potentials thereby affecting sodium channel activation and promoting spontaneous and repetitive firing. This toxin is active only on insects. The protein is Insect toxin BsIT4 of Hottentotta tamulus sindicus (Scorpion).